Here is a 574-residue protein sequence, read N- to C-terminus: Lengsin (574 aa).

Disordered regions lie at residues 1 to 36 (MNDE…KVTK) and 66 to 131 (GNMS…IPTT). Residues 11–23 (NTRDEGNETEASR) show a composition bias toward basic and acidic residues. Over residues 25 to 36 (SKLRRTRKKVTK) the composition is skewed to basic residues. Over residues 91-131 (NQTTVIKPSPLKTSASAPCSEFNTNSNHADNTWEDTQIPTT) the composition is skewed to polar residues. A GS beta-grasp domain is found at 148–242 (NHLQFVRFEA…VICDTFTVTG (95 aa)). The GS catalytic domain maps to 249–574 (PRYIAKRQLS…ERNKFLEYFI (326 aa)).

The protein belongs to the glutamine synthetase family. In terms of assembly, dodecamer. Interacts with BFSP2 and VIM.

In terms of biological role, may act as a component of the cytoskeleton or as a chaperone for the reorganization of intermediate filament proteins during terminal differentiation in the lens. Does not seem to have enzymatic activity. The polypeptide is Lengsin (LGSN) (Canis lupus familiaris (Dog)).